The sequence spans 423 residues: Serine--tRNA ligase (423 aa).

229–231 (TAE) is a binding site for L-serine. 260–262 (RKE) contacts ATP. Residue Glu283 participates in L-serine binding. An ATP-binding site is contributed by 347–350 (EISS). L-serine is bound at residue Ser383.

Belongs to the class-II aminoacyl-tRNA synthetase family. Type-1 seryl-tRNA synthetase subfamily. In terms of assembly, homodimer. The tRNA molecule binds across the dimer.

It localises to the cytoplasm. The enzyme catalyses tRNA(Ser) + L-serine + ATP = L-seryl-tRNA(Ser) + AMP + diphosphate + H(+). It carries out the reaction tRNA(Sec) + L-serine + ATP = L-seryl-tRNA(Sec) + AMP + diphosphate + H(+). It functions in the pathway aminoacyl-tRNA biosynthesis; selenocysteinyl-tRNA(Sec) biosynthesis; L-seryl-tRNA(Sec) from L-serine and tRNA(Sec): step 1/1. Functionally, catalyzes the attachment of serine to tRNA(Ser). Is also able to aminoacylate tRNA(Sec) with serine, to form the misacylated tRNA L-seryl-tRNA(Sec), which will be further converted into selenocysteinyl-tRNA(Sec). This chain is Serine--tRNA ligase, found in Syntrophotalea carbinolica (strain DSM 2380 / NBRC 103641 / GraBd1) (Pelobacter carbinolicus).